The sequence spans 264 residues: Tryptophan synthase alpha chain (264 aa).

Active-site proton acceptor residues include Glu-49 and Asp-60.

The protein belongs to the TrpA family. As to quaternary structure, tetramer of two alpha and two beta chains.

The enzyme catalyses (1S,2R)-1-C-(indol-3-yl)glycerol 3-phosphate + L-serine = D-glyceraldehyde 3-phosphate + L-tryptophan + H2O. The protein operates within amino-acid biosynthesis; L-tryptophan biosynthesis; L-tryptophan from chorismate: step 5/5. The alpha subunit is responsible for the aldol cleavage of indoleglycerol phosphate to indole and glyceraldehyde 3-phosphate. The sequence is that of Tryptophan synthase alpha chain from Synechocystis sp. (strain ATCC 27184 / PCC 6803 / Kazusa).